Consider the following 236-residue polypeptide: Snake venom serine protease ussurin (236 aa).

In terms of domain architecture, Peptidase S1 spans 1–227; it reads VIGGVECNIN…YTDWIQSIIS (227 aa). C28 and C44 are oxidised to a cystine. Catalysis depends on charge relay system residues H43 and D88. N99 and N100 each carry an N-linked (GlcNAc...) asparagine glycan. Cystine bridges form between C120–C188, C152–C167, and C178–C203. The active-site Charge relay system is the S182.

This sequence belongs to the peptidase S1 family. Snake venom subfamily. As to quaternary structure, monomer. Expressed by the venom gland.

It localises to the secreted. Its function is as follows. Snake venom serine protease that may act in the hemostasis system of the prey. The polypeptide is Snake venom serine protease ussurin (Gloydius ussuriensis (Ussuri mamushi)).